A 348-amino-acid polypeptide reads, in one-letter code: Quinone oxidoreductase-like protein 1 (348 aa).

Belongs to the zinc-containing alcohol dehydrogenase family. Quinone oxidoreductase subfamily. In terms of assembly, component of the FERRY complex composed of five subunits, TBCK, PPP1R21, FERRY3, CRYZL1 and GATD1 with a ratio of 1:2:1:2:4, respectively.

Its subcellular location is the early endosome. Functionally, component of the FERRY complex (Five-subunit Endosomal Rab5 and RNA/ribosome intermediary). The FERRY complex directly interacts with mRNAs and RAB5A, and functions as a RAB5A effector involved in the localization and the distribution of specific mRNAs most likely by mediating their endosomal transport. The complex recruits mRNAs and ribosomes to early endosomes through direct mRNA-interaction. The protein is Quinone oxidoreductase-like protein 1 (Cryzl1) of Mus musculus (Mouse).